Consider the following 512-residue polypeptide: 23S rRNA (uracil(1939)-C(5))-methyltransferase RlmD (512 aa).

The segment covering 1 to 14 (MQPTDSKTSTSDTT) has biased composition (low complexity). The tract at residues 1–45 (MQPTDSKTSTSDTTEQPNETQTITIPPSKKKSKPSSKTRRRLKDA) is disordered. Positions 15–25 (EQPNETQTITI) are enriched in polar residues. The span at 28–42 (SKKKSKPSSKTRRRL) shows a compositional bias: basic residues. The region spanning 41 to 113 (RLKDAEPLPF…TSFEEGDAVN (73 aa)) is the TRAM domain. 4 residues coordinate [4Fe-4S] cluster: C127, C133, C136, and C215. S-adenosyl-L-methionine is bound by residues Q340, F369, N374, E393, D420, and D441. Catalysis depends on C467, which acts as the Nucleophile.

It belongs to the class I-like SAM-binding methyltransferase superfamily. RNA M5U methyltransferase family. RlmD subfamily.

It catalyses the reaction uridine(1939) in 23S rRNA + S-adenosyl-L-methionine = 5-methyluridine(1939) in 23S rRNA + S-adenosyl-L-homocysteine + H(+). Functionally, catalyzes the formation of 5-methyl-uridine at position 1939 (m5U1939) in 23S rRNA. The protein is 23S rRNA (uracil(1939)-C(5))-methyltransferase RlmD of Psychrobacter arcticus (strain DSM 17307 / VKM B-2377 / 273-4).